We begin with the raw amino-acid sequence, 294 residues long: Retinoic acid receptor responder protein 1 (294 aa).

Residues 1–20 (MQPRRQRLPAPWSGPRGPRP) lie on the Lumenal side of the membrane. The chain crosses the membrane as a helical; Signal-anchor for type III membrane protein span at residues 21 to 42 (TAPLLALLLLLAPVAAPAGSGD). Cystatin LXN-type domains are found at residues 38 to 153 (AGSG…EKKK) and 173 to 276 (EIVS…TPEE). An O-linked (Xyl...) (chondroitin sulfate) serine glycan is attached at Ser40. The Cytoplasmic segment spans residues 43–294 (PDDPGQPQDA…AVVPTELSNF (252 aa)). The segment at 273-294 (TPEEASGTEEGSAVVPTELSNF) is disordered.

The protein belongs to the protease inhibitor I47 (latexin) family. Interacts with AGBL2, KIF11 and MAPRE1. Not N-glycosylated. O-glycosylated; contains chondroitin sulfate. Detected in urine (at protein level).

The protein resides in the membrane. The protein localises to the secreted. Functionally, inhibitor of the cytoplasmic carboxypeptidase AGBL2, may regulate the alpha-tubulin tyrosination cycle. This Homo sapiens (Human) protein is Retinoic acid receptor responder protein 1 (RARRES1).